The following is a 149-amino-acid chain: Transcriptional repressor NrdR (149 aa).

Residues 3 to 33 fold into a zinc finger; it reads CPFCSSEDTKVVDSRTTIDGSTKRRRECNNC. The 91-residue stretch at 48 to 138 folds into the ATP-cone domain; sequence IYVVKKDNRR…VYKEFDDIKS (91 aa).

The protein belongs to the NrdR family. Zn(2+) is required as a cofactor.

Functionally, negatively regulates transcription of bacterial ribonucleotide reductase nrd genes and operons by binding to NrdR-boxes. This is Transcriptional repressor NrdR from Fusobacterium nucleatum subsp. nucleatum (strain ATCC 25586 / DSM 15643 / BCRC 10681 / CIP 101130 / JCM 8532 / KCTC 2640 / LMG 13131 / VPI 4355).